A 23-amino-acid chain; its full sequence is Acidic phospholipase A2 Ts-A5 (23 aa).

Ca(2+) serves as cofactor. In terms of processing, contains 7 disulfide bonds. Expressed by the venom gland.

The protein localises to the secreted. It carries out the reaction a 1,2-diacyl-sn-glycero-3-phosphocholine + H2O = a 1-acyl-sn-glycero-3-phosphocholine + a fatty acid + H(+). Its function is as follows. Snake venom phospholipase A2 (PLA2) that shows a moderate inhibition of ADP-induced human platelet aggregation when tested on platelet rich plasma. Exhibits high hydrolytic activities and prefers the anionic micelles (dPPC with deoxycholate) to the zwitterionic micelles (dPPC with Triton X-100). PLA2 catalyzes the calcium-dependent hydrolysis of the 2-acyl groups in 3-sn-phosphoglycerides. In Trimeresurus stejnegeri (Chinese green tree viper), this protein is Acidic phospholipase A2 Ts-A5.